A 423-amino-acid polypeptide reads, in one-letter code: CinA-like protein (423 aa).

It belongs to the CinA family.

In Synechococcus sp. (strain CC9311), this protein is CinA-like protein.